The primary structure comprises 542 residues: Apolipoprotein N-acyltransferase (542 aa).

Transmembrane regions (helical) follow at residues 24–44 (VVAS…GLFA), 54–74 (VWCI…SWML), 85–105 (FVWG…SCLV), 116–136 (ALVW…YGLL), 160–180 (FFGW…CFAV), and 190–210 (GLWL…YEYL). Residues 220–499 (LRVAIVQPGY…TGVLQVSVPL (280 aa)) form the CN hydrolase domain. The active-site Proton acceptor is E264. K349 is a catalytic residue. C404 serves as the catalytic Nucleophile. The chain crosses the membrane as a helical span at residues 509–529 (LGDAPLLLIAVCSVIGAIAYF).

The protein belongs to the CN hydrolase family. Apolipoprotein N-acyltransferase subfamily.

It is found in the cell inner membrane. The enzyme catalyses N-terminal S-1,2-diacyl-sn-glyceryl-L-cysteinyl-[lipoprotein] + a glycerophospholipid = N-acyl-S-1,2-diacyl-sn-glyceryl-L-cysteinyl-[lipoprotein] + a 2-acyl-sn-glycero-3-phospholipid + H(+). The protein operates within protein modification; lipoprotein biosynthesis (N-acyl transfer). Its function is as follows. Catalyzes the phospholipid dependent N-acylation of the N-terminal cysteine of apolipoprotein, the last step in lipoprotein maturation. The chain is Apolipoprotein N-acyltransferase from Chlamydia trachomatis serovar D (strain ATCC VR-885 / DSM 19411 / UW-3/Cx).